The following is a 351-amino-acid chain: UPF0421 protein BC_2748 (351 aa).

A run of 4 helical transmembrane segments spans residues 19–39 (IAVFLTVLVCDFFNIPTIFAV), 74–94 (FTFFLGHQAISYALAAMFTIV), 109–129 (TLTAVAMIPITANHYFTAFLI), and 131–151 (LATTSTGIIVSTLVNFFIFPP).

Belongs to the UPF0421 family.

The protein resides in the cell membrane. This chain is UPF0421 protein BC_2748, found in Bacillus cereus (strain ATCC 14579 / DSM 31 / CCUG 7414 / JCM 2152 / NBRC 15305 / NCIMB 9373 / NCTC 2599 / NRRL B-3711).